Here is a 172-residue protein sequence, read N- to C-terminus: RNA silencing suppressor p19 (172 aa).

The segment at 153–172 is disordered; sequence EGNVSRGSPEGTEAFKEESE.

Belongs to the tombusvirus protein p19 family. As to quaternary structure, homodimer.

In terms of biological role, viral suppressor of RNA silencing which binds specifically to silencing RNAs (siRNAs). Acts as a molecular caliper to specifically select siRNAs based on the length of the duplex region of the RNA. The sequence is that of RNA silencing suppressor p19 from Pear latent virus (PeLV).